A 232-amino-acid chain; its full sequence is Ribose-5-phosphate isomerase A (232 aa).

Substrate contacts are provided by residues 31–34 (TGST), 87–90 (DGAD), and 100–103 (KGGG). Glutamate 109 acts as the Proton acceptor in catalysis. Lysine 127 contacts substrate.

The protein belongs to the ribose 5-phosphate isomerase family. As to quaternary structure, homodimer.

It carries out the reaction aldehydo-D-ribose 5-phosphate = D-ribulose 5-phosphate. Its pathway is carbohydrate degradation; pentose phosphate pathway; D-ribose 5-phosphate from D-ribulose 5-phosphate (non-oxidative stage): step 1/1. Its function is as follows. Catalyzes the reversible conversion of ribose-5-phosphate to ribulose 5-phosphate. This Bifidobacterium adolescentis (strain ATCC 15703 / DSM 20083 / NCTC 11814 / E194a) protein is Ribose-5-phosphate isomerase A.